A 559-amino-acid polypeptide reads, in one-letter code: Putative helicase 22 (559 aa).

The Helicase ATP-binding domain maps to valine 186 to serine 347. Residue alanine 199 to serine 206 coordinates ATP. Positions aspartate 300–histidine 303 match the DEAH box motif. Residues threonine 410–asparagine 552 form the Helicase C-terminal domain.

The sequence is that of Putative helicase 22 (SIFV0022) from Sulfolobus islandicus filamentous virus (isolate Iceland/Hveragerdi) (SIFV).